We begin with the raw amino-acid sequence, 235 residues long: Probable endonuclease LCL3 (235 aa).

Residues 11-33 (ISLIHPKVLLLSAGVTTSLFLSY) form a helical membrane-spanning segment. The TNase-like domain maps to 58-216 (TPLYGRVTRV…KWLRRGLWSL (159 aa)). R107 is a catalytic residue. Residue D112 participates in Ca(2+) binding. Residues E115 and R155 contribute to the active site.

This sequence belongs to the LCL3 family.

The protein localises to the mitochondrion. The protein resides in the membrane. The protein is Probable endonuclease LCL3 (LCL3) of Debaryomyces hansenii (strain ATCC 36239 / CBS 767 / BCRC 21394 / JCM 1990 / NBRC 0083 / IGC 2968) (Yeast).